We begin with the raw amino-acid sequence, 92 residues long: Small ribosomal subunit protein bS20 (92 aa).

This sequence belongs to the bacterial ribosomal protein bS20 family.

Functionally, binds directly to 16S ribosomal RNA. This is Small ribosomal subunit protein bS20 from Magnetococcus marinus (strain ATCC BAA-1437 / JCM 17883 / MC-1).